Here is a 163-residue protein sequence, read N- to C-terminus: uncharacterized protein (163 aa).

The tract at residues 142–163 is disordered; sequence PQIVISEHNNTKETSPSRQFEH. The span at 153–163 shows a compositional bias: polar residues; sequence KETSPSRQFEH.

This sequence belongs to the RCAN family.

Functionally, inhibits calcineurin-dependent transcriptional responses by binding to the catalytic domain of calcineurin. This is an uncharacterized protein from Schizosaccharomyces pombe (strain 972 / ATCC 24843) (Fission yeast).